The sequence spans 749 residues: Small G protein signaling modulator 3 (749 aa).

One can recognise a Rab-GAP TBC domain in the interval 113–304 (GIPHGMRPQL…RIWDLFFYEG (192 aa)). Ser405 is subject to Phosphoserine. Residues 414–438 (EDDLEALKAKNIKQTELVADLREAI) are a coiled coil. The SH3 domain occupies 479-538 (SHRRRAKALLDFERHDDDELGFRKNDIITIISQKDEHCWVGELNGLRGWFPAKFVEVLDE). Residues 554 to 717 (GVTDLVRGTL…FAFSLSQDWE (164 aa)) enclose the RUN domain.

It belongs to the small G protein signaling modulator family. As to quaternary structure, interacts with GJA1. Interaction with GJA1 induces its degradation. Interacts (via RUN domain) with NF2 (via C-terminus). Interacts with RAB3A, RAB4A, RAB5A, RAB8A, RAB11A, RAP1A, RAP1B, RAP2A, RAP2B and PDCD6I. No interaction with RAB27A. No interaction with GJB1 or GJD2. In terms of tissue distribution, expressed in brain, liver, kidney and testis. Moderately expressed in heart, very weakly in lung and muscle. Not expressed in spleen.

The protein localises to the cytoplasm. In terms of biological role, may play a cooperative role in NF2-mediated growth suppression of cells. May act as a modulator of small G protein RAB- and RAP-mediated neuronal signal transduction and vesicular transportation pathways. The polypeptide is Small G protein signaling modulator 3 (Rattus norvegicus (Rat)).